The primary structure comprises 364 residues: MAEVPPGPSSLLPPPAPAAPAAAELRCPFPAGAALACCSEDEEDDEEHEGGCGSPAGGEAATSAKARSCLRCPQLPPEQQQQQLNGLIGPELRHLRAAATLKSKVLSAAEAAAPDGASKVTATKGAEGHPGERPPHSVPNNARTALPGRSEAAAAAAGAASDPAAARNGLVEGTEQQEEEEMDEQVRLLSSSLTTGCSLRSSQGREAEPGEDRTIRYVRYESELQMPDIMRLITKDLSEPYSIYTYRYFIHNWPQLCFLAMVGEECVGAIVCKLDMHKKMFRRGYIAMLAVDSKYRRNGIGTNLVKKAIYAMVEGDCDEVVLETEITNKSALKLYENLGFVRDKRLFRYYLNGVDALRLKLWLR.

The span at 1–18 shows a compositional bias: pro residues; that stretch reads MAEVPPGPSSLLPPPAPA. Disordered stretches follow at residues 1–21, 39–65, and 110–164; these read MAEV…AAPA, SEDE…TSAK, and EAAA…SDPA. Phosphoserine occurs at positions 39 and 54. Residues 39 to 48 are compositionally biased toward acidic residues; that stretch reads SEDEEDDEEH. A compositionally biased stretch (basic and acidic residues) spans 126 to 135; that stretch reads AEGHPGERPP. The segment covering 152–164 has biased composition (low complexity); the sequence is AAAAAAGAASDPA. Residues S192, S198, and S201 each carry the phosphoserine modification. Residues 216–364 form the N-acetyltransferase domain; it reads RYVRYESELQ…DALRLKLWLR (149 aa). Position 235 is an N6-acetyllysine (K235).

It belongs to the acetyltransferase family. MAK3 subfamily. In terms of assembly, component of the N-terminal acetyltransferase C (NatC) complex, which is composed of NAA35, NAA38 and NAA30.

It localises to the cytoplasm. The protein localises to the nucleus. It carries out the reaction N-terminal L-methionyl-L-leucyl-[protein] + acetyl-CoA = N-terminal N(alpha)-acetyl-L-methionyl-L-leucyl-[protein] + CoA + H(+). It catalyses the reaction N-terminal L-methionyl-L-isoleucyl-[protein] + acetyl-CoA = N-terminal N(alpha)-acetyl-L-methionyl-L-isoleucyl-[protein] + CoA + H(+). The enzyme catalyses N-terminal L-methionyl-L-phenylalanyl-[protein] + acetyl-CoA = N-terminal N(alpha)-acetyl-L-methionyl-L-phenylalanyl-[protein] + CoA + H(+). The catalysed reaction is N-terminal L-methionyl-L-tryptophyl-[protein] + acetyl-CoA = N-terminal N(alpha)-acetyl-L-methionyl-L-tryptophyl-[protein] + CoA + H(+). It carries out the reaction N-terminal L-methionyl-L-tyrosyl-[protein] + acetyl-CoA = N-terminal N(alpha)-acetyl-L-methionyl-L-tyrosyl-[protein] + CoA + H(+). Functionally, catalytic subunit of the N-terminal acetyltransferase C (NatC) complex. Catalyzes acetylation of the N-terminal methionine residues of peptides beginning with Met-Leu-Ala and Met-Leu-Gly. N-terminal acetylation protects proteins from ubiquitination and degradation by the N-end rule pathway. Necessary for the lysosomal localization and function of ARL8B sugeesting that ARL8B is a NatC substrate. The polypeptide is N-alpha-acetyltransferase 30 (Naa30) (Mus musculus (Mouse)).